The sequence spans 277 residues: Diaminopimelate epimerase (277 aa).

Positions 15 and 74 each coordinate substrate. The active-site Proton donor is C83. Residues 84 to 85 (GN), N159, N194, and 212 to 213 (ER) contribute to the substrate site. Residue C221 is the Proton acceptor of the active site. Position 222–223 (222–223 (GT)) interacts with substrate.

Belongs to the diaminopimelate epimerase family. Homodimer.

The protein resides in the cytoplasm. The catalysed reaction is (2S,6S)-2,6-diaminopimelate = meso-2,6-diaminopimelate. It participates in amino-acid biosynthesis; L-lysine biosynthesis via DAP pathway; DL-2,6-diaminopimelate from LL-2,6-diaminopimelate: step 1/1. Its function is as follows. Catalyzes the stereoinversion of LL-2,6-diaminopimelate (L,L-DAP) to meso-diaminopimelate (meso-DAP), a precursor of L-lysine and an essential component of the bacterial peptidoglycan. Involved in the succinylase branch of the diaminopimelate biosynthesis. This chain is Diaminopimelate epimerase, found in Corynebacterium glutamicum (strain ATCC 13032 / DSM 20300 / JCM 1318 / BCRC 11384 / CCUG 27702 / LMG 3730 / NBRC 12168 / NCIMB 10025 / NRRL B-2784 / 534).